A 520-amino-acid chain; its full sequence is DDB1- and CUL4-associated factor 17 (520 aa).

The next 2 helical transmembrane spans lie at 186 to 206 (VLLY…ILEI) and 222 to 242 (GILI…QTIA).

As to quaternary structure, interacts with DDB1, CUL4A and CUL4B. In terms of tissue distribution, ubiquitously expressed.

The protein localises to the membrane. It localises to the nucleus. The protein resides in the nucleolus. The protein operates within protein modification; protein ubiquitination. Its function is as follows. May function as a substrate receptor for CUL4-DDB1 E3 ubiquitin-protein ligase complex. The protein is DDB1- and CUL4-associated factor 17 (DCAF17) of Homo sapiens (Human).